The primary structure comprises 520 residues: GMP synthase [glutamine-hydrolyzing] (520 aa).

The Glutamine amidotransferase type-1 domain occupies 3-200 (AIAIIDFGSQ…FLDIANCKRD (198 aa)). Residue cysteine 84 is the Nucleophile of the active site. Residues histidine 175 and glutamate 177 contribute to the active site. Residues 201 to 386 (WTMKSFIEEQ…IGLSDEIIFQ (186 aa)) enclose the GMPS ATP-PPase domain. 228–234 (SGGVDSS) lines the ATP pocket.

In terms of assembly, homodimer.

The catalysed reaction is XMP + L-glutamine + ATP + H2O = GMP + L-glutamate + AMP + diphosphate + 2 H(+). It participates in purine metabolism; GMP biosynthesis; GMP from XMP (L-Gln route): step 1/1. Its function is as follows. Catalyzes the synthesis of GMP from XMP. The polypeptide is GMP synthase [glutamine-hydrolyzing] (Wolbachia pipientis wMel).